A 219-amino-acid chain; its full sequence is Sugar fermentation stimulation protein homolog (219 aa).

It belongs to the SfsA family.

The sequence is that of Sugar fermentation stimulation protein homolog from Archaeoglobus fulgidus (strain ATCC 49558 / DSM 4304 / JCM 9628 / NBRC 100126 / VC-16).